The following is a 415-amino-acid chain: Histidine--tRNA ligase (415 aa).

It belongs to the class-II aminoacyl-tRNA synthetase family. In terms of assembly, homodimer.

The protein localises to the cytoplasm. It carries out the reaction tRNA(His) + L-histidine + ATP = L-histidyl-tRNA(His) + AMP + diphosphate + H(+). This Clostridium perfringens (strain ATCC 13124 / DSM 756 / JCM 1290 / NCIMB 6125 / NCTC 8237 / Type A) protein is Histidine--tRNA ligase.